The sequence spans 307 residues: tRNA dimethylallyltransferase (307 aa).

ATP is bound at residue 9–16; it reads GPTAIGKT. 11–16 contributes to the substrate binding site; sequence TAIGKT. 2 interaction with substrate tRNA regions span residues 34–37 and 164–168; these read DSRQ and QRMMR.

It belongs to the IPP transferase family. In terms of assembly, monomer. Mg(2+) serves as cofactor.

It catalyses the reaction adenosine(37) in tRNA + dimethylallyl diphosphate = N(6)-dimethylallyladenosine(37) in tRNA + diphosphate. In terms of biological role, catalyzes the transfer of a dimethylallyl group onto the adenine at position 37 in tRNAs that read codons beginning with uridine, leading to the formation of N6-(dimethylallyl)adenosine (i(6)A). The sequence is that of tRNA dimethylallyltransferase from Flavobacterium psychrophilum (strain ATCC 49511 / DSM 21280 / CIP 103535 / JIP02/86).